The sequence spans 260 residues: Thiamine thiazole synthase (260 aa).

Residues Ala-36, 55–56 (EQ), Gly-63, and 154–156 (HVD) contribute to the NAD(+) site. Fe cation contacts are provided by Asp-156 and His-171. Residue Met-224 participates in NAD(+) binding. Arg-234 lines the glycine pocket.

The protein belongs to the THI4 family. Homooctamer; tetramer of dimers. Requires Fe(2+) as cofactor.

The catalysed reaction is hydrogen sulfide + glycine + NAD(+) = ADP-5-ethyl-4-methylthiazole-2-carboxylate + nicotinamide + 3 H2O + H(+). It participates in cofactor biosynthesis; thiamine diphosphate biosynthesis. Functionally, involved in the biosynthesis of the thiazole moiety of thiamine. Catalyzes the conversion of NAD and glycine to adenosine diphosphate 5-(2-hydroxyethyl)-4-methylthiazole-2-carboxylate (ADT), an adenylated thiazole intermediate, using free sulfide as a source of sulfur. The chain is Thiamine thiazole synthase from Methanosarcina mazei (strain ATCC BAA-159 / DSM 3647 / Goe1 / Go1 / JCM 11833 / OCM 88) (Methanosarcina frisia).